Consider the following 158-residue polypeptide: UPF0725 protein At3g57210 (158 aa).

Belongs to the UPF0725 (EMB2204) family.

The protein is UPF0725 protein At3g57210 of Arabidopsis thaliana (Mouse-ear cress).